The primary structure comprises 124 residues: Flagellar transcriptional regulator FlhD (124 aa).

This sequence belongs to the FlhD family. As to quaternary structure, homodimer; disulfide-linked. Forms a heterohexamer composed of two FlhC and four FlhD subunits. Each FlhC binds a FlhD dimer, forming a heterotrimer, and a hexamer assembles by dimerization of two heterotrimers.

The protein resides in the cytoplasm. In terms of biological role, functions in complex with FlhC as a master transcriptional regulator that regulates transcription of several flagellar and non-flagellar operons by binding to their promoter region. Activates expression of class 2 flagellar genes, including fliA, which is a flagellum-specific sigma factor that turns on the class 3 genes. Also regulates genes whose products function in a variety of physiological pathways. This chain is Flagellar transcriptional regulator FlhD, found in Pectobacterium carotovorum (Erwinia carotovora).